Here is a 481-residue protein sequence, read N- to C-terminus: Sucrose phosphorylase (481 aa).

Sucrose is bound by residues D49, H87, 191 to 193 (RLD), E234, 291 to 292 (HD), 335 to 338 (DIYQ), and R392. D193 serves as the catalytic Nucleophile. E234 functions as the Proton donor in the catalytic mechanism.

The protein belongs to the glycosyl hydrolase 13 family. Sucrose phosphorylase subfamily.

It is found in the cytoplasm. It carries out the reaction sucrose + phosphate = D-fructose + alpha-D-glucose 1-phosphate. Its function is as follows. Intracellular catabolism of sucrose. Being intracellular, probably not involved in synthesis of extracellular polysaccharides. This chain is Sucrose phosphorylase, found in Streptococcus mutans serotype c (strain ATCC 700610 / UA159).